The following is a 298-amino-acid chain: Small ribosomal subunit protein uS3 (298 aa).

A KH type-2 domain is found at 38 to 106 (IRRRLSRGME…QVQLNILEVK (69 aa)). The segment at 212–298 (KQKQQESEVR…EPRADEKTEG (87 aa)) is disordered. Residues 214 to 237 (KQQESEVRPPRGERGERGGRPERG) show a composition bias toward basic and acidic residues. Residues 265 to 278 (GSAQSPEQAQTSGD) show a composition bias toward polar residues.

It belongs to the universal ribosomal protein uS3 family. Part of the 30S ribosomal subunit. Forms a tight complex with proteins S10 and S14.

In terms of biological role, binds the lower part of the 30S subunit head. Binds mRNA in the 70S ribosome, positioning it for translation. This chain is Small ribosomal subunit protein uS3, found in Saccharopolyspora erythraea (strain ATCC 11635 / DSM 40517 / JCM 4748 / NBRC 13426 / NCIMB 8594 / NRRL 2338).